We begin with the raw amino-acid sequence, 528 residues long: MALEVLEALDSARTQWYHVTAIVIAGMGFFTDAYDLFCITTVSKLLGRLYYFDPSTGKPGKLPNNVNNLVTGVALVGTLSGQLFFGYLGDKLGRKKVYGVTLILMVACAICSGLSFGASAKSVMGTLCFFRFWLGFGIGGDYPLSATIMSEYANKRTRGAFIAAVFAMQGVGIIFAGLVSMCLSAGFKASYHAPSFHDDPIMSTQPQGDLMWRLVLMIGAVPAAMTYYWRMKMPETGRYTAIIEGNAKQAAADMARVLDIEIQAEQDKLAEFKAANDYPLWSNEFFTRHGRHLIGTMTSWFLLDIAFYSQNLTQKDIFPAMGLIDKDFEMNAIQEVFETSRAMFVIALFGTFPGYWFTVFFIEKLGRYKIQLIGFFMMSVFMFIIGVKYDYLRNENSHMFALLYGLTFFFANFGPNSTTFVLPAELFPTRVRSTCHALSAAAGKAGAMVGAFGIQNYTQKGEQKQIKHAMMILAVTNLIGFFCSFLVTETKGRSLEEISGEDGRESELTPTPPNNRVPTRQEPRSETM.

The Cytoplasmic segment spans residues 1 to 18 (MALEVLEALDSARTQWYH). A helical transmembrane segment spans residues 19–39 (VTAIVIAGMGFFTDAYDLFCI). Residues 40–68 (TTVSKLLGRLYYFDPSTGKPGKLPNNVNN) lie on the Extracellular side of the membrane. Residues 69-89 (LVTGVALVGTLSGQLFFGYLG) traverse the membrane as a helical segment. The Cytoplasmic segment spans residues 90–96 (DKLGRKK). The helical transmembrane segment at 97–117 (VYGVTLILMVACAICSGLSFG) threads the bilayer. Over 118-122 (ASAKS) the chain is Extracellular. A helical transmembrane segment spans residues 123–143 (VMGTLCFFRFWLGFGIGGDYP). Over 144 to 158 (LSATIMSEYANKRTR) the chain is Cytoplasmic. A helical membrane pass occupies residues 159 to 179 (GAFIAAVFAMQGVGIIFAGLV). The Extracellular segment spans residues 180-208 (SMCLSAGFKASYHAPSFHDDPIMSTQPQG). The chain crosses the membrane as a helical span at residues 209–229 (DLMWRLVLMIGAVPAAMTYYW). The Cytoplasmic segment spans residues 230-292 (RMKMPETGRY…NEFFTRHGRH (63 aa)). The chain crosses the membrane as a helical span at residues 293 to 313 (LIGTMTSWFLLDIAFYSQNLT). Residues 314–341 (QKDIFPAMGLIDKDFEMNAIQEVFETSR) are Extracellular-facing. A helical membrane pass occupies residues 342–362 (AMFVIALFGTFPGYWFTVFFI). Over 363 to 371 (EKLGRYKIQ) the chain is Cytoplasmic. The helical transmembrane segment at 372–392 (LIGFFMMSVFMFIIGVKYDYL) threads the bilayer. The Extracellular segment spans residues 393 to 401 (RNENSHMFA). Residues 402–422 (LLYGLTFFFANFGPNSTTFVL) traverse the membrane as a helical segment. The Cytoplasmic portion of the chain corresponds to 423-433 (PAELFPTRVRS). Residues 434–454 (TCHALSAAAGKAGAMVGAFGI) traverse the membrane as a helical segment. Residues 455-467 (QNYTQKGEQKQIK) lie on the Extracellular side of the membrane. N456 is a glycosylation site (N-linked (GlcNAc...) asparagine). A helical transmembrane segment spans residues 468 to 488 (HAMMILAVTNLIGFFCSFLVT). Residues 489 to 528 (ETKGRSLEEISGEDGRESELTPTPPNNRVPTRQEPRSETM) are Cytoplasmic-facing. 2 stretches are compositionally biased toward basic and acidic residues: residues 496–507 (EEISGEDGRESE) and 519–528 (TRQEPRSETM). The disordered stretch occupies residues 496–528 (EEISGEDGRESELTPTPPNNRVPTRQEPRSETM).

Belongs to the major facilitator superfamily. Phosphate:H(+) symporter (TC 2.A.1.9) family. Expressed only in mycorrhizal roots, exclusively in cortical cells containing arbuscules, upon arbuscular mycorrhizal (AM) symbiosis with AM fungi (e.g. Gigaspora margarita and Funnelliformis mosseae). Also observed in root tips of non-mycorrhizal roots, in a phosphate (Pi) depended-manner, highest expression levels being observed in low Pi conditions.

Its subcellular location is the cell membrane. It carries out the reaction phosphate(in) + H(+)(in) = phosphate(out) + H(+)(out). In terms of biological role, low-affinity transporter for external inorganic phosphate (Pi) probably involved in the acquisition of phosphate released by arbuscular mycorrhizal (AM) fungi (e.g. Gigaspora margarita and Funnelliformis mosseae) during AM symbiosis; required for propper mycorrhizal arbuscule morphology. Acts as a Pi-sensing machinery at the root tip level, independently of AM fungi, involved in the regulation of early root branching and lateral roots formation. The protein is Low affinity inorganic phosphate transporter 4 of Lotus japonicus (Lotus corniculatus var. japonicus).